The sequence spans 407 residues: Probable NADPH dehydrogenase (407 aa).

The FMN site is built by Thr-49 and Gln-124. Tyr-206 (proton donor) is an active-site residue. Positions 254 and 357 each coordinate FMN.

Belongs to the NADH:flavin oxidoreductase/NADH oxidase family. FMN serves as cofactor.

The enzyme catalyses A + NADPH + H(+) = AH2 + NADP(+). Its function is as follows. Oxidoreductase that binds mammalian estrogens with high affinity. The sequence is that of Probable NADPH dehydrogenase from Candida albicans (strain SC5314 / ATCC MYA-2876) (Yeast).